Reading from the N-terminus, the 120-residue chain is Ig heavy chain V region 36-65 (120 aa).

An Ig-like domain is found at 1-111; that stretch reads VQLQQSGAEL…GGSYYFDYWG (111 aa).

The polypeptide is Ig heavy chain V region 36-65 (Mus musculus (Mouse)).